The primary structure comprises 253 residues: Triosephosphate isomerase (253 aa).

9–11 (NWK) contributes to the substrate binding site. The active-site Electrophile is histidine 97. Glutamate 169 acts as the Proton acceptor in catalysis. Substrate-binding positions include glycine 175, serine 215, and 236 to 237 (GG).

This sequence belongs to the triosephosphate isomerase family. In terms of assembly, homodimer.

The protein resides in the cytoplasm. It catalyses the reaction D-glyceraldehyde 3-phosphate = dihydroxyacetone phosphate. It functions in the pathway carbohydrate biosynthesis; gluconeogenesis. The protein operates within carbohydrate degradation; glycolysis; D-glyceraldehyde 3-phosphate from glycerone phosphate: step 1/1. Its function is as follows. Involved in the gluconeogenesis. Catalyzes stereospecifically the conversion of dihydroxyacetone phosphate (DHAP) to D-glyceraldehyde-3-phosphate (G3P). This chain is Triosephosphate isomerase, found in Staphylococcus saprophyticus subsp. saprophyticus (strain ATCC 15305 / DSM 20229 / NCIMB 8711 / NCTC 7292 / S-41).